Reading from the N-terminus, the 602-residue chain is mRNA-capping enzyme subunit beta (602 aa).

The segment at 1 to 249 (MSEHHSKRAL…NESNSEETHD (249 aa)) is disordered. A compositionally biased stretch (basic and acidic residues) spans 15–42 (LVNHDENDKSKLQKLADNESSVRSDDNR). The span at 48–64 (NIVNGNNSNSDLNSNGV) shows a compositional bias: low complexity. A compositionally biased stretch (acidic residues) spans 65 to 76 (IEEDTDTDDDVG). Positions 88–110 (DYDKQDRFSPEKKRIQARKKDTS) are enriched in basic and acidic residues. A compositionally biased stretch (low complexity) spans 114-128 (PSISNESPSNSKESS). Over residues 141-169 (TDRKDSSEEKPDLTGPELVKEPDTNEYKR) the composition is skewed to basic and acidic residues. Residues 171-181 (SIQSITNAEDT) are compositionally biased toward polar residues. Basic and acidic residues-rich tracts occupy residues 213-222 (TEEHKPKTET) and 231-249 (QENK…ETHD). Residue Lys276 is the N6-GMP-lysine intermediate of the active site.

The protein belongs to the fungal TPase family. In terms of assembly, heterodimer. The mRNA-capping enzyme is composed of two separate chains alpha and beta, respectively a mRNA guanylyltransferase and an mRNA 5'-triphosphate monophosphatase. Mg(2+) is required as a cofactor.

The protein resides in the nucleus. It carries out the reaction a 5'-end triphospho-ribonucleoside in mRNA + H2O = a 5'-end diphospho-ribonucleoside in mRNA + phosphate + H(+). Functionally, first step of mRNA capping. Converts the 5'-triphosphate end of a nascent mRNA chain into a diphosphate end. This chain is mRNA-capping enzyme subunit beta (CET1), found in Candida glabrata (strain ATCC 2001 / BCRC 20586 / JCM 3761 / NBRC 0622 / NRRL Y-65 / CBS 138) (Yeast).